A 174-amino-acid chain; its full sequence is Small ribosomal subunit protein bS16 (174 aa).

A disordered region spans residues 81 to 174 (QRFTGEPAPP…DATTDATPSA (94 aa)). The segment covering 87–97 (PAPPPMKTAPP) has biased composition (pro residues). Residues 98–118 (KPDKKALFEAAAKEAAGEPRA) show a composition bias toward basic and acidic residues. The span at 135-158 (ETTPAAEAAPDAAASADEPAGGAS) shows a compositional bias: low complexity. Positions 160–174 (AAESQDATTDATPSA) are enriched in polar residues.

The protein belongs to the bacterial ribosomal protein bS16 family.

This Acidothermus cellulolyticus (strain ATCC 43068 / DSM 8971 / 11B) protein is Small ribosomal subunit protein bS16.